The chain runs to 202 residues: Crustacean calcium-binding protein 23 (202 aa).

N-acetylserine is present on S1. EF-hand domains follow at residues 33 to 68 (SGLLSLGRLFRRLDKDRSWTLSKEELSRGVGQFGLD), 69 to 104 (LSDGDINKLFSSFEKDGQSGINYEEFLESLRPEMTE), 105 to 140 (PRKKAVEAAFKHLDKTGDGVVGLEDIKGKYSAKTHP), and 148 to 185 (TEDEILKKFLNMFETNTSVDGKVTKKEFFDYYSGLSKA). 5 residues coordinate Ca(2+): D84, E93, D118, D122, and D129.

In terms of assembly, monomer or disulfide-linked dimers. As to expression, striated muscle and brain.

In terms of biological role, possibly acts as a regulatory protein and not as a calcium buffer or transport protein. This chain is Crustacean calcium-binding protein 23, found in Faxonius limosus (Spinycheek crayfish).